We begin with the raw amino-acid sequence, 30 residues long: Non-toxic phospholipase A2 (30 aa).

Ca(2+) is bound by residues Tyr-26, Gly-28, and Gly-30.

The protein belongs to the phospholipase A2 family. Group I subfamily. In terms of assembly, homodimer. Ca(2+) serves as cofactor. Post-translationally, glycosylated. In terms of tissue distribution, expressed by the venom gland.

It localises to the secreted. It catalyses the reaction a 1,2-diacyl-sn-glycero-3-phosphocholine + H2O = a 1-acyl-sn-glycero-3-phosphocholine + a fatty acid + H(+). Its activity is regulated as follows. Enzymatic activity is diminished by Cd(2+) and Hg(2+). Functionally, relatively highly potent phospholipase A2 that displays potent antimicrobial and hemolytic activities. It does not show cytotoxic effects on the three human cell lines tested. PLA2 catalyzes the calcium-dependent hydrolysis of the 2-acyl groups in 3-sn-phosphoglycerides. It shows similar potencies on both Gram-negative and Gram-positive bacteria: B.cereus (MIC&gt;9 ug/ml), B.subtilis (MIC&gt;12 ug/ml), E.faecalis (MIC&gt;7 ug/ml), S.epidermidis (MIC&gt;12 ug/ml), S.aureux (MIC&gt;5 ug/ml), E.coli (MIC&gt;7 ug/ml), K.pneumonia (MIC&gt;8 ug/ml), P.aeruginosa (MIC&gt;10 ug/ml), and S.enteric (MIC&gt;9 ug/ml). It also shows antifungal activities: A.niger (MIC&gt;15 ug/ml), B.cinerea (MIC&gt;12 ug/ml), F.solani (MIC&gt;15 ug/ml), and P.digitatum (MIC&gt;10 ug/ml). This chain is Non-toxic phospholipase A2, found in Walterinnesia aegyptia (Desert black snake).